A 972-amino-acid polypeptide reads, in one-letter code: uncharacterized protein (972 aa).

A signal peptide spans 1–21; it reads MTNMILLSAVFLSLAILETHC. At 22-932 the chain is on the extracellular side; sequence ANHISTGIST…KELGEKLYHV (911 aa). Positions 892 to 912 are disordered; sequence EPTVTTTTESPPPPTTTTRQI. A helical membrane pass occupies residues 933–953; sequence LFFMGVLTVSVAGGVIILSFI. Over 954 to 972 the chain is Cytoplasmic; that stretch reads GCLIMRKMEDAPQKTKYSV.

The protein resides in the host membrane. This is an uncharacterized protein from Magallana gigas (Pacific oyster).